Here is a 153-residue protein sequence, read N- to C-terminus: 6,7-dimethyl-8-ribityllumazine synthase (153 aa).

Residues phenylalanine 21, 55 to 57, and 79 to 81 each bind 5-amino-6-(D-ribitylamino)uracil; these read AFE and TVI. 84-85 provides a ligand contact to (2S)-2-hydroxy-3-oxobutyl phosphate; that stretch reads AT. Histidine 87 functions as the Proton donor in the catalytic mechanism. Phenylalanine 112 lines the 5-amino-6-(D-ribitylamino)uracil pocket. Arginine 126 is a binding site for (2S)-2-hydroxy-3-oxobutyl phosphate.

Belongs to the DMRL synthase family. As to quaternary structure, forms an icosahedral capsid composed of 60 subunits, arranged as a dodecamer of pentamers.

It catalyses the reaction (2S)-2-hydroxy-3-oxobutyl phosphate + 5-amino-6-(D-ribitylamino)uracil = 6,7-dimethyl-8-(1-D-ribityl)lumazine + phosphate + 2 H2O + H(+). The protein operates within cofactor biosynthesis; riboflavin biosynthesis; riboflavin from 2-hydroxy-3-oxobutyl phosphate and 5-amino-6-(D-ribitylamino)uracil: step 1/2. Its function is as follows. Catalyzes the formation of 6,7-dimethyl-8-ribityllumazine by condensation of 5-amino-6-(D-ribitylamino)uracil with 3,4-dihydroxy-2-butanone 4-phosphate. This is the penultimate step in the biosynthesis of riboflavin. The polypeptide is 6,7-dimethyl-8-ribityllumazine synthase (Bacillus cereus (strain ATCC 10987 / NRS 248)).